Here is an 813-residue protein sequence, read N- to C-terminus: Tax1-binding protein 1 homolog (813 aa).

Phosphoserine is present on residues serine 124, serine 138, and serine 225. A coiled-coil region spans residues 144–596 (TTKAGLLELK…SYSLQLAEKD (453 aa)). Positions 320–420 (EEIGKLQSCL…ELQLHAVKTD (101 aa)) are oligomerization. Residue serine 618 is modified to Phosphoserine; by IKKA. Residue serine 631 is modified to Phosphoserine. The disordered stretch occupies residues 667–732 (AHETRDGADG…NVPIPPDPAN (66 aa)). Position 692 is a phosphoserine; by IKKA (serine 692). 2 consecutive UBZ1-type zinc fingers follow at residues 751–777 (HKKC…VESH) and 778–804 (WKVC…VQTH). Zn(2+) contacts are provided by cysteine 754, cysteine 757, histidine 773, histidine 777, cysteine 781, cysteine 784, histidine 800, and histidine 804.

As to quaternary structure, homooligomer. Interacts with TNFAIP3. Interacts with STARD13. Interacts with MYO6. Interacts with TOM1; the interaction is indirect and is mediated by MYO6, which acts as a bridge between TOM1 and TAX1BP1. Interacts with MAVS; this interaction induces MAVS polyubiquitination. Interacts with TNIP1. Interacts with TRAF6; this interaction mediates deubiquitination of TRAF6 and inhibition of NF-kappa-B activation. Interacts with RIPK1; this interaction negatively regulates RIPK1 ubiquitination. Interacts with NBR1. Interacts with TBK1. Interacts with RB1CC1. Interacts with SQSTM1. Interacts with AZI2. Interacts with TICAM1 and TRIM32; these interactions target TICAM1 to TAX1BP1-mediated selective autophagic degradation. Post-translationally, phosphorylated in the C-terminal region by CHUK/IKKA leading to NF-kappa-B signaling down-regulation.

It localises to the cytoplasm. It is found in the mitochondrion. Its subcellular location is the preautophagosomal structure. The protein localises to the cytoplasmic vesicle. The protein resides in the autophagosome. Ubiquitin-binding adapter that participates in inflammatory, antiviral and innate immune processes as well as selective autophagy regulation. Plays a key role in the negative regulation of NF-kappa-B and IRF3 signalings by acting as an adapter for the ubiquitin-editing enzyme A20/TNFAIP3 to bind and inactivate its substrates. Disrupts the interactions between the E3 ubiquitin ligase TRAF3 and TBK1/IKBKE to attenuate 'Lys63'-linked polyubiquitination of TBK1 and thereby IFN-beta production. Also recruits A20/TNFAIP3 to ubiquitinated signaling proteins TRAF6 and RIPK1, leading to their deubiquitination and disruption of IL-1 and TNF-induced NF-kappa-B signaling pathways. Inhibits virus-induced apoptosis by inducing the 'Lys-48'-linked polyubiquitination and degradation of MAVS via recruitment of the E3 ligase ITCH, thereby attenuating MAVS-mediated apoptosis signaling. As a macroautophagy/autophagy receptor, facilitates the xenophagic clearance of pathogenic bacteria such as Salmonella typhimurium and Mycobacterium tuberculosis. Upon NBR1 recruitment to the SQSTM1-ubiquitin condensates, acts as the major recruiter of RB1CC1 to these ubiquitin condensates to promote their autophagic degradation. Mediates the autophagic degradation of other substrates including TICAM1. The protein is Tax1-binding protein 1 homolog (Tax1bp1) of Rattus norvegicus (Rat).